We begin with the raw amino-acid sequence, 597 residues long: Arginine--tRNA ligase (597 aa).

The 'HIGH' region signature appears at 138–148; it reads ANPTGPMHVGH.

It belongs to the class-I aminoacyl-tRNA synthetase family. In terms of assembly, monomer.

It is found in the cytoplasm. The enzyme catalyses tRNA(Arg) + L-arginine + ATP = L-arginyl-tRNA(Arg) + AMP + diphosphate. This chain is Arginine--tRNA ligase, found in Rhodopseudomonas palustris (strain HaA2).